The following is a 93-amino-acid chain: MAKTASPGATPPGNGAEPLPDNYETALAELETLVARMEGGALSLEDSLAAYRRGAALVAFCQQQLEKVEQQVRVLDGATLKPAAATDGEDDDL.

The interval Met1–Asn22 is disordered.

Belongs to the XseB family. In terms of assembly, heterooligomer composed of large and small subunits.

The protein resides in the cytoplasm. The enzyme catalyses Exonucleolytic cleavage in either 5'- to 3'- or 3'- to 5'-direction to yield nucleoside 5'-phosphates.. Functionally, bidirectionally degrades single-stranded DNA into large acid-insoluble oligonucleotides, which are then degraded further into small acid-soluble oligonucleotides. This chain is Exodeoxyribonuclease 7 small subunit, found in Burkholderia multivorans (strain ATCC 17616 / 249).